The following is a 94-amino-acid chain: Integration host factor subunit beta (94 aa).

Belongs to the bacterial histone-like protein family. Heterodimer of an alpha and a beta chain.

Its function is as follows. This protein is one of the two subunits of integration host factor, a specific DNA-binding protein that functions in genetic recombination as well as in transcriptional and translational control. In Pasteurella multocida (strain Pm70), this protein is Integration host factor subunit beta (ihfB).